A 282-amino-acid polypeptide reads, in one-letter code: 5'-nucleotidase SurE (282 aa).

A divalent metal cation-binding residues include aspartate 12, aspartate 13, serine 43, and asparagine 98.

This sequence belongs to the SurE nucleotidase family. The cofactor is a divalent metal cation.

The protein resides in the cytoplasm. It catalyses the reaction a ribonucleoside 5'-phosphate + H2O = a ribonucleoside + phosphate. Nucleotidase that shows phosphatase activity on nucleoside 5'-monophosphates. The chain is 5'-nucleotidase SurE from Hyperthermus butylicus (strain DSM 5456 / JCM 9403 / PLM1-5).